We begin with the raw amino-acid sequence, 62 residues long: Large ribosomal subunit protein bL28 (62 aa).

The protein belongs to the bacterial ribosomal protein bL28 family.

The chain is Large ribosomal subunit protein bL28 from Helicobacter acinonychis (strain Sheeba).